Here is a 581-residue protein sequence, read N- to C-terminus: Arginine--tRNA ligase (581 aa).

The short motif at 126–136 (PNLAKEMHVGH) is the 'HIGH' region element.

The protein belongs to the class-I aminoacyl-tRNA synthetase family. In terms of assembly, monomer.

It is found in the cytoplasm. It carries out the reaction tRNA(Arg) + L-arginine + ATP = L-arginyl-tRNA(Arg) + AMP + diphosphate. This chain is Arginine--tRNA ligase, found in Shewanella denitrificans (strain OS217 / ATCC BAA-1090 / DSM 15013).